Consider the following 292-residue polypeptide: MNIVLKLETKERQQLAEKYKSYEQVSKNPYITFFAKVGKTSISVYTSGKVVFQGNEAEKLASDFGHIAQVVPQKQTNLIGTDEVGNGSYFGGLMVTASFVSEENLNFLKEIGVADSKKLTDEKICQIAPKLIDRIPHVALVVEPAKYNEVIASGYNAVSIKVALHNQAIYLLEKQLGHKPENIVIDAFTTEANYKKYVNKEQNHPLTKVTLLTKAEDQFLAVAVSSIISRYLFLENLKKLSKESGFTLPSGAGNLSDKIAAQIIKSQGVDALNQLAKLHFANTQKAIKIAQL.

Residues 76-292 (TNLIGTDEVG…TQKAIKIAQL (217 aa)) form the RNase H type-2 domain. A divalent metal cation contacts are provided by D82, E83, and D186.

The protein belongs to the RNase HII family. RnhC subfamily. Mn(2+) is required as a cofactor. Requires Mg(2+) as cofactor.

It localises to the cytoplasm. The catalysed reaction is Endonucleolytic cleavage to 5'-phosphomonoester.. Its function is as follows. Endonuclease that specifically degrades the RNA of RNA-DNA hybrids. The protein is Ribonuclease HIII of Lactococcus lactis subsp. lactis (strain IL1403) (Streptococcus lactis).